The following is a 481-amino-acid chain: Glutamate--tRNA ligase (481 aa).

The short motif at 28–38 (PSPTGFLHLGG) is the 'HIGH' region element. The span at 139-148 (RYDGTWRPEP) shows a compositional bias: basic and acidic residues. Positions 139–159 (RYDGTWRPEPGKTLPPVPADR) are disordered. Residues 260-264 (KLSKR) carry the 'KMSKS' region motif. Lys263 provides a ligand contact to ATP.

It belongs to the class-I aminoacyl-tRNA synthetase family. Glutamate--tRNA ligase type 1 subfamily. In terms of assembly, monomer.

Its subcellular location is the cytoplasm. It catalyses the reaction tRNA(Glu) + L-glutamate + ATP = L-glutamyl-tRNA(Glu) + AMP + diphosphate. In terms of biological role, catalyzes the attachment of glutamate to tRNA(Glu) in a two-step reaction: glutamate is first activated by ATP to form Glu-AMP and then transferred to the acceptor end of tRNA(Glu). In Bordetella parapertussis (strain 12822 / ATCC BAA-587 / NCTC 13253), this protein is Glutamate--tRNA ligase.